The sequence spans 161 residues: Phosphopantetheine adenylyltransferase (161 aa).

Serine 9 provides a ligand contact to substrate. ATP-binding positions include 9–10 (SF) and histidine 17. Residues lysine 41, threonine 73, and arginine 87 each coordinate substrate. ATP-binding positions include 88 to 90 (GLR), glutamate 98, and 123 to 129 (FAHISST).

Belongs to the bacterial CoaD family. Homohexamer. Mg(2+) serves as cofactor.

It is found in the cytoplasm. The catalysed reaction is (R)-4'-phosphopantetheine + ATP + H(+) = 3'-dephospho-CoA + diphosphate. It participates in cofactor biosynthesis; coenzyme A biosynthesis; CoA from (R)-pantothenate: step 4/5. Functionally, reversibly transfers an adenylyl group from ATP to 4'-phosphopantetheine, yielding dephospho-CoA (dPCoA) and pyrophosphate. The polypeptide is Phosphopantetheine adenylyltransferase (Chloroflexus aurantiacus (strain ATCC 29366 / DSM 635 / J-10-fl)).